The following is a 905-amino-acid chain: Transcriptional regulator MNL1 (905 aa).

The span at Met1–Leu29 shows a compositional bias: polar residues. 8 disordered regions span residues Met1–Phe34, Gln312–Thr340, Met383–Tyr419, Ser434–Ser460, Thr525–Arg544, Asn584–Ser613, Asn625–Glu671, and Pro685–Thr733. Low complexity predominate over residues Gln312–Gln334. Positions Asn439–Ser460 are enriched in low complexity. The span at Asn584–Thr598 shows a compositional bias: polar residues. Positions Lys628 to Gly639 are enriched in basic residues. Composition is skewed to low complexity over residues Gln647 to Thr669 and Ser690 to Ser710. C2H2-type zinc fingers lie at residues Tyr832–His855 and Tyr861–His883. A disordered region spans residues Gln885 to Gly905.

It localises to the nucleus. In terms of biological role, transcription factor that activates stress response genes via SLE (STRE-like) elements. Required for adaptation to weak acid stress such as acetic acid stress, but seems not involved in the response to heat, osmotic, ethanol, nutrient, oxidative, or heavy-metal stress. Activates a subset of the genes that are repressed by NRG1. In Candida albicans (strain SC5314 / ATCC MYA-2876) (Yeast), this protein is Transcriptional regulator MNL1 (MNL1).